The sequence spans 457 residues: Hydrogenobyrinate a,c-diamide synthase (457 aa).

A GATase cobBQ-type domain is found at 255–441 (TVAIAAGRAF…LHTHPAATPG (187 aa)). C337 functions as the Nucleophile in the catalytic mechanism.

This sequence belongs to the CobB/CbiA family. Mg(2+) is required as a cofactor.

The enzyme catalyses hydrogenobyrinate + 2 L-glutamine + 2 ATP + 2 H2O = hydrogenobyrinate a,c-diamide + 2 L-glutamate + 2 ADP + 2 phosphate + 2 H(+). The protein operates within cofactor biosynthesis; adenosylcobalamin biosynthesis; cob(II)yrinate a,c-diamide from precorrin-2 (aerobic route): step 9/10. In terms of biological role, catalyzes the ATP-dependent amidation of the two carboxylate groups at positions a and c of hydrogenobyrinate, using either L-glutamine or ammonia as the nitrogen source. In Mycobacterium bovis (strain ATCC BAA-935 / AF2122/97), this protein is Hydrogenobyrinate a,c-diamide synthase.